Here is a 231-residue protein sequence, read N- to C-terminus: Large ribosomal subunit protein uL3 (231 aa).

Gln151 bears the N5-methylglutamine mark.

Belongs to the universal ribosomal protein uL3 family. In terms of assembly, part of the 50S ribosomal subunit. Forms a cluster with proteins L14 and L19. In terms of processing, methylated by PrmB.

Functionally, one of the primary rRNA binding proteins, it binds directly near the 3'-end of the 23S rRNA, where it nucleates assembly of the 50S subunit. In Granulibacter bethesdensis (strain ATCC BAA-1260 / CGDNIH1), this protein is Large ribosomal subunit protein uL3.